The primary structure comprises 215 residues: Rod-determining factor A (215 aa).

Involved in cell-shape determination. Required for the formation of rods and wild-type-like motility. The polypeptide is Rod-determining factor A (Haloferax volcanii (strain ATCC 29605 / DSM 3757 / JCM 8879 / NBRC 14742 / NCIMB 2012 / VKM B-1768 / DS2) (Halobacterium volcanii)).